The following is a 288-amino-acid chain: Protoheme IX farnesyltransferase (288 aa).

The next 9 membrane-spanning stretches (helical) occupy residues 16 to 36 (VWSL…PYFN), 37 to 57 (LHYI…SMGA), 88 to 108 (INGL…LAAF), 111 to 131 (LYAA…YSYL), 138 to 158 (WNII…WYTV), 162 to 182 (FSIL…IHVW), 210 to 230 (AICI…PAFF), 236 to 256 (VYMI…IVFV), and 265 to 285 (LKLF…VLIF).

Belongs to the UbiA prenyltransferase family. Protoheme IX farnesyltransferase subfamily.

The protein localises to the cell membrane. The enzyme catalyses heme b + (2E,6E)-farnesyl diphosphate + H2O = Fe(II)-heme o + diphosphate. It functions in the pathway porphyrin-containing compound metabolism; heme O biosynthesis; heme O from protoheme: step 1/1. Functionally, converts heme B (protoheme IX) to heme O by substitution of the vinyl group on carbon 2 of heme B porphyrin ring with a hydroxyethyl farnesyl side group. In Thermoplasma acidophilum (strain ATCC 25905 / DSM 1728 / JCM 9062 / NBRC 15155 / AMRC-C165), this protein is Protoheme IX farnesyltransferase.